Here is a 263-residue protein sequence, read N- to C-terminus: Phosphatidylglycerol--prolipoprotein diacylglyceryl transferase (263 aa).

The next 4 membrane-spanning stretches (helical) occupy residues 6-26 (VIFS…VLGI), 50-70 (LLTA…VLIY), 85-105 (TWEG…AVII), and 112-132 (IPIF…LFLG). Arginine 133 serves as a coordination point for a 1,2-diacyl-sn-glycero-3-phospho-(1'-sn-glycerol). 3 helical membrane-spanning segments follow: residues 169–189 (LYEA…LFFL), 197–217 (GALT…VEFF), and 233–253 (MGQL…LGAL).

It belongs to the Lgt family.

The protein localises to the cell membrane. The catalysed reaction is L-cysteinyl-[prolipoprotein] + a 1,2-diacyl-sn-glycero-3-phospho-(1'-sn-glycerol) = an S-1,2-diacyl-sn-glyceryl-L-cysteinyl-[prolipoprotein] + sn-glycerol 1-phosphate + H(+). Its pathway is protein modification; lipoprotein biosynthesis (diacylglyceryl transfer). Its function is as follows. Catalyzes the transfer of the diacylglyceryl group from phosphatidylglycerol to the sulfhydryl group of the N-terminal cysteine of a prolipoprotein, the first step in the formation of mature lipoproteins. This chain is Phosphatidylglycerol--prolipoprotein diacylglyceryl transferase, found in Wolbachia sp. subsp. Drosophila simulans (strain wRi).